The sequence spans 350 residues: Glycerol-3-phosphate dehydrogenase [NAD(+)], cytoplasmic (350 aa).

NAD(+) contacts are provided by residues 11-16 (GSGNWG), F98, K121, and A155. K121 is a binding site for substrate. K206 functions as the Proton acceptor in the catalytic mechanism. Residues R270 and Q299 each coordinate NAD(+). A substrate-binding site is contributed by 270 to 271 (RN).

This sequence belongs to the NAD-dependent glycerol-3-phosphate dehydrogenase family. As to quaternary structure, homodimer.

The protein localises to the cytoplasm. The enzyme catalyses sn-glycerol 3-phosphate + NAD(+) = dihydroxyacetone phosphate + NADH + H(+). The protein operates within phospholipid metabolism; alpha-glycerophosphate cycle. This is Glycerol-3-phosphate dehydrogenase [NAD(+)], cytoplasmic (Gpdh1) from Drosophila ezoana (Fruit fly).